We begin with the raw amino-acid sequence, 824 residues long: DNA replication helicase (824 aa).

90–97 (GTAGAGKT) is a binding site for ATP.

It belongs to the herpesviridae helicase family. As to quaternary structure, associates with the primase and the primase-associated factor to form the helicase-primase complex.

The protein localises to the host nucleus. Its function is as follows. Component of the helicase/primase complex. Unwinds the DNA at the replication forks and generates single-stranded DNA for both leading and lagging strand synthesis. The primase synthesizes short RNA primers on the lagging strand that the polymerase elongates using dNTPs. Possesses helicase-like motifs and therefore may act as the helicase subunit of the complex. This is DNA replication helicase from Human herpesvirus 6B (strain Z29) (HHV-6 variant B).